We begin with the raw amino-acid sequence, 1429 residues long: Nitric oxide synthase 1 (1429 aa).

The interval 1–200 (MEEHTFGVQQ…LQDSGEQDEL (200 aa)) is interaction with NOSIP. A PDZ domain is found at 17 to 99 (SVRLFKRKVG…ETHVVLILRG (83 aa)). Disordered regions lie at residues 114–174 (DGTP…SVSQ) and 271–298 (NNPY…SRCP). Residues 163-240 (QGRGQGAGSV…TGIQVDRDLD (78 aa)) are interaction with DYNLL1/PIN. Polar residues predominate over residues 272–294 (NPYSENEQSPASGKQSPTKNGSP). S280 carries the phosphoserine modification. S334 contributes to the (6R)-L-erythro-5,6,7,8-tetrahydrobiopterin binding site. A heme b-binding site is contributed by C415. Residues Q478, W587, Y588, and E592 each contribute to the L-arginine site. (6R)-L-erythro-5,6,7,8-tetrahydrobiopterin-binding residues include V677, W678, and F691. Y706 serves as a coordination point for heme b. Residues 725 to 745 (KRRAIGFKKLAEAVKFSAKLM) are calmodulin-binding. One can recognise a Flavodoxin-like domain in the interval 755-935 (ATILYATETG…AFRTWAKKVF (181 aa)). FMN-binding residues include T761, E762, T763, K765, S766, S807, T808, and G812. A phosphoserine mark is found at S847, S857, and S858. Residues S886, H891, C893, E919, and Q923 each coordinate FMN. The FAD-binding FR-type domain occupies 990–1237 (KRVSAARLLS…VRGAPSFHLP (248 aa)). R1010 lines the NADP(+) pocket. Residues H1032, R1173, Y1174, Y1175, S1176, T1191, and A1193 each coordinate FAD. Residue S1196 coordinates NADP(+). Y1197, V1210, C1211, and S1212 together coordinate FAD. NADP(+)-binding residues include T1251, R1284, S1313, R1314, K1320, Y1322, Q1324, D1357, T1398, and R1400.

Belongs to the NOS family. Homodimer. Interacts with DLG4; the interaction possibly being prevented by the association between NOS1 and CAPON. Forms a ternary complex with CAPON and RASD1. Forms a ternary complex with CAPON and SYN1. Interacts with ZDHHC23. Interacts with NOSIP; which may impair its synaptic location. Interacts with HTR4. Interacts with VAC14. Interacts (via N-terminal domain) with DLG4 (via N-terminal tandem pair of PDZ domains). Interacts with SLC6A4. Forms a complex with ASL, ASS1 and SLC7A1; the complex regulates cell-autonomous L-arginine synthesis and citrulline recycling while channeling extracellular L-arginine to nitric oxide synthesis pathway. Interacts with DMD; localizes NOS1 to sarcolemma in muscle cells. Interacts with DYNLL1; inhibits the nitric oxide synthase activity. It depends on heme b as a cofactor. FAD serves as cofactor. The cofactor is FMN. (6R)-L-erythro-5,6,7,8-tetrahydrobiopterin is required as a cofactor. Post-translationally, ubiquitinated; mediated by STUB1/CHIP in the presence of Hsp70 and Hsp40 (in vitro). As to expression, widely expressed in the nervous system: expressed in cerebrum, olfactory bulb, hippocampus, midbrain, cerebellum, pons, medulla oblongata, and spinal cord. Also found in skeletal muscle, where it is localized beneath the sarcolemma of fast twitch muscle fibers, and in spleen, heart, kidney, and liver. N-NOS-1 and N-NOS-2 are found in all parts of the nervous system. NNOS beta and gamma occur in a region-specific manner in the brain and NNOS beta expression is developmentally regulated. NNOS Mu is only found in mature skeletal and cardiac muscles.

The protein localises to the cell membrane. It localises to the sarcolemma. It is found in the cell projection. The protein resides in the dendritic spine. It carries out the reaction 2 L-arginine + 3 NADPH + 4 O2 + H(+) = 2 L-citrulline + 2 nitric oxide + 3 NADP(+) + 4 H2O. With respect to regulation, stimulated by calcium/calmodulin. Inhibited by DYNLL1 that prevents the dimerization of the protein. Inhibited by NOSIP. Its function is as follows. Produces nitric oxide (NO) which is a messenger molecule with diverse functions throughout the body. In the brain and peripheral nervous system, NO displays many properties of a neurotransmitter. Probably has nitrosylase activity and mediates cysteine S-nitrosylation of cytoplasmic target proteins such SRR. Isoform NNOS Mu may be an effector enzyme for the dystrophin complex. In Mus musculus (Mouse), this protein is Nitric oxide synthase 1.